Here is a 223-residue protein sequence, read N- to C-terminus: Ribosomal RNA small subunit methyltransferase G (223 aa).

S-adenosyl-L-methionine is bound by residues G85, F90, and R154.

Belongs to the methyltransferase superfamily. RNA methyltransferase RsmG family.

The protein resides in the cytoplasm. The catalysed reaction is guanosine(527) in 16S rRNA + S-adenosyl-L-methionine = N(7)-methylguanosine(527) in 16S rRNA + S-adenosyl-L-homocysteine. Its function is as follows. Specifically methylates the N7 position of guanine in position 527 of 16S rRNA. The chain is Ribosomal RNA small subunit methyltransferase G from Rhodopseudomonas palustris (strain TIE-1).